Reading from the N-terminus, the 336-residue chain is 3-hydroxyisobutyrate dehydrogenase, mitochondrial (336 aa).

The N-terminal 36 residues, 1 to 36, are a transit peptide targeting the mitochondrion; it reads MAASLRLLGAASGLRYWSRRLRPAAGSFAAVCSRSV. NAD(+) is bound at residue 40–68; that stretch reads TPVGFIGLGNMGNPMAKNLMKHGYPLIIY. 2 positions are modified to N6-acetyllysine; alternate: Lys-60 and Lys-76. Lys-60 and Lys-76 each carry N6-succinyllysine; alternate. The residue at position 95 (Lys-95) is an N6-succinyllysine. NAD(+)-binding positions include 103–104 and Asn-108; that span reads LP. Position 121 is an N6-acetyllysine (Lys-121). NAD(+) is bound at residue Thr-134. Lys-141 is subject to N6-succinyllysine. Lys-145 carries the N6-acetyllysine modification. An N6-acetyllysine; alternate modification is found at Lys-149. Lys-149 carries the post-translational modification N6-succinyllysine; alternate. Lys-209 is an active-site residue. An N6-acetyllysine; alternate mark is found at Lys-238 and Lys-242. N6-succinyllysine; alternate is present on residues Lys-238 and Lys-242. Position 284 (Lys-284) interacts with NAD(+). Lys-297 carries the post-translational modification N6-succinyllysine. N6-acetyllysine; alternate is present on Lys-321. Lys-321 carries the N6-succinyllysine; alternate modification.

The protein belongs to the HIBADH-related family. 3-hydroxyisobutyrate dehydrogenase subfamily. Homodimer. As to expression, detected in skin fibroblasts.

It localises to the mitochondrion. It catalyses the reaction 3-hydroxy-2-methylpropanoate + NAD(+) = 2-methyl-3-oxopropanoate + NADH + H(+). The protein operates within amino-acid degradation; L-valine degradation. The chain is 3-hydroxyisobutyrate dehydrogenase, mitochondrial (HIBADH) from Homo sapiens (Human).